The following is a 422-amino-acid chain: Histidine--tRNA ligase (422 aa).

Belongs to the class-II aminoacyl-tRNA synthetase family. As to quaternary structure, homodimer.

It is found in the cytoplasm. The enzyme catalyses tRNA(His) + L-histidine + ATP = L-histidyl-tRNA(His) + AMP + diphosphate + H(+). The chain is Histidine--tRNA ligase from Onion yellows phytoplasma (strain OY-M).